Reading from the N-terminus, the 316-residue chain is Beta-ketoacyl-[acyl-carrier-protein] synthase III (316 aa).

Residues Cys112 and His243 contribute to the active site. The tract at residues 244-248 (QANLR) is ACP-binding. The active site involves Asn273.

Belongs to the thiolase-like superfamily. FabH family. In terms of assembly, homodimer.

It localises to the cytoplasm. It carries out the reaction malonyl-[ACP] + acetyl-CoA + H(+) = 3-oxobutanoyl-[ACP] + CO2 + CoA. Its pathway is lipid metabolism; fatty acid biosynthesis. In terms of biological role, catalyzes the condensation reaction of fatty acid synthesis by the addition to an acyl acceptor of two carbons from malonyl-ACP. Catalyzes the first condensation reaction which initiates fatty acid synthesis and may therefore play a role in governing the total rate of fatty acid production. Possesses both acetoacetyl-ACP synthase and acetyl transacylase activities. Its substrate specificity determines the biosynthesis of branched-chain and/or straight-chain of fatty acids. This Yersinia pseudotuberculosis serotype O:1b (strain IP 31758) protein is Beta-ketoacyl-[acyl-carrier-protein] synthase III.